The following is an 82-amino-acid chain: Small ribosomal subunit protein bS18 (82 aa).

The disordered stretch occupies residues 1–25 (MTEMNQTAIRRPFHRRRKTCPFSGT).

It belongs to the bacterial ribosomal protein bS18 family. As to quaternary structure, part of the 30S ribosomal subunit. Forms a tight heterodimer with protein bS6.

Its function is as follows. Binds as a heterodimer with protein bS6 to the central domain of the 16S rRNA, where it helps stabilize the platform of the 30S subunit. This chain is Small ribosomal subunit protein bS18, found in Bartonella henselae (strain ATCC 49882 / DSM 28221 / CCUG 30454 / Houston 1) (Rochalimaea henselae).